The chain runs to 445 residues: C4-dicarboxylate transport protein (445 aa).

The next 8 helical transmembrane spans lie at 17-37 (FYQILYVQVLVAIVIGVLLGY), 56-76 (LVKMIIAPVIFLTVTTGIAAM), 91-111 (VYFLVFSTLALIIGMVVSHIV), 157-177 (FVGGDILQVLFVAVLFGLSLA), 200-220 (LVAILMKAAPIGAFGAMAFTI), 233-253 (MLVGTFYATSVLFVVVVLGMV), 319-339 (IYMTMAALFIAQACDIPLSLG), and 367-387 (AATLSVVPTVPVAGMALILGV).

Belongs to the dicarboxylate/amino acid:cation symporter (DAACS) (TC 2.A.23) family.

The protein resides in the cell inner membrane. Responsible for the transport of dicarboxylates such as succinate, fumarate, and malate from the periplasm across the membrane. The chain is C4-dicarboxylate transport protein from Bordetella avium (strain 197N).